The following is a 433-amino-acid chain: tRNA(Ile)-lysidine synthase (433 aa).

37 to 42 provides a ligand contact to ATP; it reads SGGKDS.

The protein belongs to the tRNA(Ile)-lysidine synthase family.

The protein resides in the cytoplasm. It catalyses the reaction cytidine(34) in tRNA(Ile2) + L-lysine + ATP = lysidine(34) in tRNA(Ile2) + AMP + diphosphate + H(+). In terms of biological role, ligates lysine onto the cytidine present at position 34 of the AUA codon-specific tRNA(Ile) that contains the anticodon CAU, in an ATP-dependent manner. Cytidine is converted to lysidine, thus changing the amino acid specificity of the tRNA from methionine to isoleucine. The polypeptide is tRNA(Ile)-lysidine synthase (Leptospira interrogans serogroup Icterohaemorrhagiae serovar copenhageni (strain Fiocruz L1-130)).